A 517-amino-acid polypeptide reads, in one-letter code: Maturase K (517 aa).

This sequence belongs to the intron maturase 2 family. MatK subfamily.

The protein localises to the plastid. It is found in the chloroplast. Functionally, usually encoded in the trnK tRNA gene intron. Probably assists in splicing its own and other chloroplast group II introns. This is Maturase K from Paris tetraphylla.